Reading from the N-terminus, the 88-residue chain is Acylphosphatase (88 aa).

Residues 3-88 form the Acylphosphatase-like domain; it reads AVDVLISGRV…RAGHQGFEVR (86 aa). Residues arginine 18 and asparagine 36 contribute to the active site.

Belongs to the acylphosphatase family.

It carries out the reaction an acyl phosphate + H2O = a carboxylate + phosphate + H(+). The protein is Acylphosphatase (acyP) of Methanocella arvoryzae (strain DSM 22066 / NBRC 105507 / MRE50).